The sequence spans 301 residues: Phosphatidylserine decarboxylase proenzyme (301 aa).

Active-site charge relay system; for autoendoproteolytic cleavage activity residues include Asp-117, His-173, and Ser-260. Catalysis depends on Ser-260, which acts as the Schiff-base intermediate with substrate; via pyruvic acid; for decarboxylase activity. Ser-260 bears the Pyruvic acid (Ser); by autocatalysis mark.

Belongs to the phosphatidylserine decarboxylase family. PSD-B subfamily. Prokaryotic type II sub-subfamily. In terms of assembly, heterodimer of a large membrane-associated beta subunit and a small pyruvoyl-containing alpha subunit. The cofactor is pyruvate. Post-translationally, is synthesized initially as an inactive proenzyme. Formation of the active enzyme involves a self-maturation process in which the active site pyruvoyl group is generated from an internal serine residue via an autocatalytic post-translational modification. Two non-identical subunits are generated from the proenzyme in this reaction, and the pyruvate is formed at the N-terminus of the alpha chain, which is derived from the carboxyl end of the proenzyme. The autoendoproteolytic cleavage occurs by a canonical serine protease mechanism, in which the side chain hydroxyl group of the serine supplies its oxygen atom to form the C-terminus of the beta chain, while the remainder of the serine residue undergoes an oxidative deamination to produce ammonia and the pyruvoyl prosthetic group on the alpha chain. During this reaction, the Ser that is part of the protease active site of the proenzyme becomes the pyruvoyl prosthetic group, which constitutes an essential element of the active site of the mature decarboxylase.

Its subcellular location is the cell membrane. It carries out the reaction a 1,2-diacyl-sn-glycero-3-phospho-L-serine + H(+) = a 1,2-diacyl-sn-glycero-3-phosphoethanolamine + CO2. It functions in the pathway phospholipid metabolism; phosphatidylethanolamine biosynthesis; phosphatidylethanolamine from CDP-diacylglycerol: step 2/2. Its function is as follows. Catalyzes the formation of phosphatidylethanolamine (PtdEtn) from phosphatidylserine (PtdSer). In Chlamydia trachomatis serovar L2 (strain ATCC VR-902B / DSM 19102 / 434/Bu), this protein is Phosphatidylserine decarboxylase proenzyme.